Reading from the N-terminus, the 187-residue chain is UPF0232 protein MUL_0004 (187 aa).

Positions 1-12 (MNGDGEQPGPGD) are enriched in gly residues. 2 disordered regions span residues 1 to 77 (MNGD…QPLG) and 166 to 187 (ASPSWRKGPRHIAGRGPRDTYG). Positions 14–30 (AARDELPSMDLVRRTLA) are enriched in basic and acidic residues. Residues 31–55 (EARAAARARGQDPGRGFAAGPAPRR) are compositionally biased toward low complexity.

It belongs to the UPF0232 family.

The sequence is that of UPF0232 protein MUL_0004 from Mycobacterium ulcerans (strain Agy99).